Consider the following 323-residue polypeptide: tRNA U34 carboxymethyltransferase (323 aa).

Carboxy-S-adenosyl-L-methionine-binding positions include K91, W105, K110, G130, 152–154, 181–182, M196, Y200, and R315; these read DPS and IE.

This sequence belongs to the class I-like SAM-binding methyltransferase superfamily. CmoB family. In terms of assembly, homotetramer.

It carries out the reaction carboxy-S-adenosyl-L-methionine + 5-hydroxyuridine(34) in tRNA = 5-carboxymethoxyuridine(34) in tRNA + S-adenosyl-L-homocysteine + H(+). Functionally, catalyzes carboxymethyl transfer from carboxy-S-adenosyl-L-methionine (Cx-SAM) to 5-hydroxyuridine (ho5U) to form 5-carboxymethoxyuridine (cmo5U) at position 34 in tRNAs. The sequence is that of tRNA U34 carboxymethyltransferase from Vibrio vulnificus (strain CMCP6).